The sequence spans 156 residues: Arginine repressor (156 aa).

It belongs to the ArgR family.

It is found in the cytoplasm. It participates in amino-acid biosynthesis; L-arginine biosynthesis [regulation]. Functionally, regulates arginine biosynthesis genes. In Aliivibrio fischeri (strain ATCC 700601 / ES114) (Vibrio fischeri), this protein is Arginine repressor.